The sequence spans 408 residues: 1-deoxy-D-xylulose 5-phosphate reductoisomerase (408 aa).

NADPH-binding residues include Thr-27, Gly-28, Ser-29, Ile-30, Ala-53, Arg-54, Asn-55, and Asn-140. Lys-141 serves as a coordination point for 1-deoxy-D-xylulose 5-phosphate. Glu-142 provides a ligand contact to NADPH. Asp-166 lines the Mn(2+) pocket. Residues Ser-167, Glu-168, Ser-192, and His-215 each contribute to the 1-deoxy-D-xylulose 5-phosphate site. A Mn(2+)-binding site is contributed by Glu-168. Gly-221 serves as a coordination point for NADPH. 4 residues coordinate 1-deoxy-D-xylulose 5-phosphate: Ser-228, Asn-233, Lys-234, and Glu-237. Position 237 (Glu-237) interacts with Mn(2+).

This sequence belongs to the DXR family. The cofactor is Mg(2+). It depends on Mn(2+) as a cofactor.

The catalysed reaction is 2-C-methyl-D-erythritol 4-phosphate + NADP(+) = 1-deoxy-D-xylulose 5-phosphate + NADPH + H(+). It participates in isoprenoid biosynthesis; isopentenyl diphosphate biosynthesis via DXP pathway; isopentenyl diphosphate from 1-deoxy-D-xylulose 5-phosphate: step 1/6. In terms of biological role, catalyzes the NADPH-dependent rearrangement and reduction of 1-deoxy-D-xylulose-5-phosphate (DXP) to 2-C-methyl-D-erythritol 4-phosphate (MEP). In Nitratidesulfovibrio vulgaris (strain DP4) (Desulfovibrio vulgaris), this protein is 1-deoxy-D-xylulose 5-phosphate reductoisomerase.